A 390-amino-acid polypeptide reads, in one-letter code: Cold-responsive protein kinase 1 (390 aa).

The 280-residue stretch at 41–320 (FSAENKIGEG…VRLLTGEKDI (280 aa)) folds into the Protein kinase domain. ATP-binding positions include 47–55 (IGEGGFGSV) and Lys-69. Tyr-114 carries the post-translational modification Phosphotyrosine. Asp-169 (proton acceptor) is an active-site residue. Phosphoserine occurs at positions 173 and 202. Residues Thr-203 and Thr-208 each carry the phosphothreonine modification. Position 216 is a phosphotyrosine (Tyr-216). The disordered stretch occupies residues 345–390 (TKTEQVNRQNYTNPSSSSNGSSRDHSNAYSSGASSANAGNTFSSTI). The segment covering 354–390 (NYTNPSSSSNGSSRDHSNAYSSGASSANAGNTFSSTI) has biased composition (low complexity).

It belongs to the protein kinase superfamily. Ser/Thr protein kinase family. In terms of assembly, interacts with and phosphorylates 14-3-3 proteins. Binds to GRF6 at the plasma membrane. In terms of processing, autophosphorylated.

It is found in the cell membrane. The enzyme catalyses L-seryl-[protein] + ATP = O-phospho-L-seryl-[protein] + ADP + H(+). The catalysed reaction is L-threonyl-[protein] + ATP = O-phospho-L-threonyl-[protein] + ADP + H(+). Its activity is regulated as follows. Activated by cold. Its function is as follows. Negative regulator of freezing tolerance that phosphorylates 14-3-3 proteins (e.g. GRF6) thus triggering their translocation from the cytosol to the nucleus in response to cold stress. The polypeptide is Cold-responsive protein kinase 1 (Arabidopsis thaliana (Mouse-ear cress)).